The chain runs to 444 residues: Enolase (444 aa).

2 residues coordinate substrate: His-163 and Glu-172. Glu-215 (proton donor) is an active-site residue. Asp-250, Glu-300, and Asp-327 together coordinate Mg(2+). Substrate-binding residues include Glu-300 and Asp-327. Residue Lys-352 is the Proton acceptor of the active site. Residues Ser-379 to Ser-382 and Lys-403 each bind substrate.

Belongs to the enolase family. Homodimer. It depends on Mg(2+) as a cofactor.

It localises to the cytoplasm. The catalysed reaction is (2R)-2-phosphoglycerate = phosphoenolpyruvate + H2O. It participates in carbohydrate degradation; glycolysis; pyruvate from D-glyceraldehyde 3-phosphate: step 4/5. The sequence is that of Enolase (PGH1) from Solanum lycopersicum (Tomato).